We begin with the raw amino-acid sequence, 410 residues long: F-box protein At3g61340 (410 aa).

In terms of domain architecture, F-box spans 17–66 (EEKSERIPFDLVIEILLRLPVKSIARFRYVSKLWQSTLRGQHFTESYLTI).

The protein is F-box protein At3g61340 of Arabidopsis thaliana (Mouse-ear cress).